We begin with the raw amino-acid sequence, 368 residues long: Homoserine O-acetyltransferase (368 aa).

One can recognise an AB hydrolase-1 domain in the interval N41–E352. S147 (nucleophile) is an active-site residue. Residue R219 participates in substrate binding. Catalysis depends on residues D313 and H346. D347 is a binding site for substrate.

This sequence belongs to the AB hydrolase superfamily. MetX family. Homodimer.

The protein resides in the cytoplasm. The catalysed reaction is L-homoserine + acetyl-CoA = O-acetyl-L-homoserine + CoA. The protein operates within amino-acid biosynthesis; L-methionine biosynthesis via de novo pathway; O-acetyl-L-homoserine from L-homoserine: step 1/1. Transfers an acetyl group from acetyl-CoA to L-homoserine, forming acetyl-L-homoserine. The polypeptide is Homoserine O-acetyltransferase (Nautilia profundicola (strain ATCC BAA-1463 / DSM 18972 / AmH)).